The sequence spans 487 residues: 6-phosphogluconate dehydrogenase, decarboxylating 1, chloroplastic (487 aa).

Met1 is subject to N-acetylmethionine. NADP(+)-binding positions include 13–18, 36–38, 80–82, and Asn108; these read GLAVMG, NRT, and VKA. Substrate is bound by residues Asn108 and 134–136; that span reads SGG. Lys188 serves as the catalytic Proton acceptor. Residue 191–192 coordinates substrate; the sequence is HN. Glu195 (proton donor) is an active-site residue. Tyr196, Lys266, Arg293, Arg458, and His464 together coordinate substrate.

The protein belongs to the 6-phosphogluconate dehydrogenase family. In terms of assembly, forms homodimer. Forms heterodimers with PGD2 or PGD3.

Its subcellular location is the plastid. The protein resides in the chloroplast. The protein localises to the cytoplasm. It is found in the cytosol. It catalyses the reaction 6-phospho-D-gluconate + NADP(+) = D-ribulose 5-phosphate + CO2 + NADPH. The protein operates within carbohydrate degradation; pentose phosphate pathway; D-ribulose 5-phosphate from D-glucose 6-phosphate (oxidative stage): step 3/3. Catalyzes the oxidative decarboxylation of 6-phosphogluconate to ribulose 5-phosphate and CO(2), with concomitant reduction of NADP to NADPH. This is 6-phosphogluconate dehydrogenase, decarboxylating 1, chloroplastic from Arabidopsis thaliana (Mouse-ear cress).